A 184-amino-acid chain; its full sequence is ATP synthase subunit delta (184 aa).

The protein belongs to the ATPase delta chain family. In terms of assembly, F-type ATPases have 2 components, F(1) - the catalytic core - and F(0) - the membrane proton channel. F(1) has five subunits: alpha(3), beta(3), gamma(1), delta(1), epsilon(1). F(0) has three main subunits: a(1), b(2) and c(10-14). The alpha and beta chains form an alternating ring which encloses part of the gamma chain. F(1) is attached to F(0) by a central stalk formed by the gamma and epsilon chains, while a peripheral stalk is formed by the delta and b chains.

The protein resides in the cell inner membrane. Functionally, f(1)F(0) ATP synthase produces ATP from ADP in the presence of a proton or sodium gradient. F-type ATPases consist of two structural domains, F(1) containing the extramembraneous catalytic core and F(0) containing the membrane proton channel, linked together by a central stalk and a peripheral stalk. During catalysis, ATP synthesis in the catalytic domain of F(1) is coupled via a rotary mechanism of the central stalk subunits to proton translocation. In terms of biological role, this protein is part of the stalk that links CF(0) to CF(1). It either transmits conformational changes from CF(0) to CF(1) or is implicated in proton conduction. This Rickettsia canadensis (strain McKiel) protein is ATP synthase subunit delta.